Consider the following 159-residue polypeptide: Phosphopantetheine adenylyltransferase (159 aa).

Residue T10 participates in substrate binding. Residues 10–11 (TF) and H18 contribute to the ATP site. Residues K42, M74, and R88 each coordinate substrate. Residues 89–91 (GLR), E99, and 124–130 (WSFISSS) each bind ATP.

This sequence belongs to the bacterial CoaD family. Homohexamer. Mg(2+) is required as a cofactor.

Its subcellular location is the cytoplasm. It carries out the reaction (R)-4'-phosphopantetheine + ATP + H(+) = 3'-dephospho-CoA + diphosphate. The protein operates within cofactor biosynthesis; coenzyme A biosynthesis; CoA from (R)-pantothenate: step 4/5. Functionally, reversibly transfers an adenylyl group from ATP to 4'-phosphopantetheine, yielding dephospho-CoA (dPCoA) and pyrophosphate. This is Phosphopantetheine adenylyltransferase from Salmonella choleraesuis (strain SC-B67).